A 673-amino-acid polypeptide reads, in one-letter code: UvrABC system protein B (673 aa).

A Helicase ATP-binding domain is found at 30-417; the sequence is NSILLGNKYQ…SSVVVDQIIR (388 aa). Residue 43-50 participates in ATP binding; it reads GVTGSGKT. The Beta-hairpin signature appears at 96–119; that stretch reads YYDYYQPESYVPSKDLFIEKEATI. A Helicase C-terminal domain is found at 434–600; the sequence is QMEDLYSEIQ…TIVKKIQNIL (167 aa). The 36-residue stretch at 627–662 folds into the UVR domain; sequence KKLIDKLKFDLEEAVNDERFEDAIVLRDKIKELSSK.

The protein belongs to the UvrB family. As to quaternary structure, forms a heterotetramer with UvrA during the search for lesions. Interacts with UvrC in an incision complex.

The protein localises to the cytoplasm. The UvrABC repair system catalyzes the recognition and processing of DNA lesions. A damage recognition complex composed of 2 UvrA and 2 UvrB subunits scans DNA for abnormalities. Upon binding of the UvrA(2)B(2) complex to a putative damaged site, the DNA wraps around one UvrB monomer. DNA wrap is dependent on ATP binding by UvrB and probably causes local melting of the DNA helix, facilitating insertion of UvrB beta-hairpin between the DNA strands. Then UvrB probes one DNA strand for the presence of a lesion. If a lesion is found the UvrA subunits dissociate and the UvrB-DNA preincision complex is formed. This complex is subsequently bound by UvrC and the second UvrB is released. If no lesion is found, the DNA wraps around the other UvrB subunit that will check the other stand for damage. This is UvrABC system protein B from Borreliella burgdorferi (strain ATCC 35210 / DSM 4680 / CIP 102532 / B31) (Borrelia burgdorferi).